A 72-amino-acid chain; its full sequence is Protein kish-A (72 aa).

The N-terminal stretch at 1 to 26 (MSAIFNFQSLLTVILLLICTCAYIRS) is a signal peptide. The Extracellular segment spans residues 27–53 (LAPSILDRNKTGLLGIFWKCARIGERK). N35 is a glycosylation site (N-linked (GlcNAc...) asparagine). A helical transmembrane segment spans residues 54 to 71 (SPYVAICCIVMAFSILFI). Residue Q72 is a topological domain, cytoplasmic.

This sequence belongs to the KISH family.

Its subcellular location is the golgi apparatus membrane. Involved in the early part of the secretory pathway. In Mus musculus (Mouse), this protein is Protein kish-A (Tmem167a).